The primary structure comprises 297 residues: Ribosomal RNA small subunit methyltransferase H (297 aa).

S-adenosyl-L-methionine is bound by residues 30–32 (GGY), aspartate 48, phenylalanine 75, aspartate 96, and glutamine 103.

Belongs to the methyltransferase superfamily. RsmH family.

The protein localises to the cytoplasm. It carries out the reaction cytidine(1402) in 16S rRNA + S-adenosyl-L-methionine = N(4)-methylcytidine(1402) in 16S rRNA + S-adenosyl-L-homocysteine + H(+). In terms of biological role, specifically methylates the N4 position of cytidine in position 1402 (C1402) of 16S rRNA. In Ehrlichia chaffeensis (strain ATCC CRL-10679 / Arkansas), this protein is Ribosomal RNA small subunit methyltransferase H.